The sequence spans 87 residues: Diazepam-binding inhibitor-like 5 (87 aa).

The region spanning Ser2 to Cys87 is the ACB domain. Residues Tyr29–Lys33, Lys55, and Tyr74 each bind an acyl-CoA.

It belongs to the ACBP family. In terms of tissue distribution, testis.

It localises to the cytoplasm. Its function is as follows. May be involved in the energy metabolism of the mature sperm. This Rattus norvegicus (Rat) protein is Diazepam-binding inhibitor-like 5 (Dbil5).